Reading from the N-terminus, the 844-residue chain is Translation initiation factor IF-2 (844 aa).

Over residues 1–11 (MTEDVKADVPK) the composition is skewed to basic and acidic residues. Disordered stretches follow at residues 1–35 (MTED…SKAV) and 79–248 (RLEA…KGAA). Positions 21-33 (TTVSGTTTSGKSK) are enriched in low complexity. A compositionally biased stretch (basic and acidic residues) spans 79–161 (RLEAEKAATK…AAEEAKRYAE (83 aa)). The segment covering 162–175 (ADDSDNESSSEDYS) has biased composition (acidic residues). Residues 200–210 (RGKNKVAKAKK) are compositionally biased toward basic residues. Residues 211–237 (GGRDDENSKNSKNERESNRKNQKDAKF) are compositionally biased toward basic and acidic residues. The 171-residue stretch at 343-513 (TRAPVVTIMG…LLQSEVLELT (171 aa)) folds into the tr-type G domain. A G1 region spans residues 352–359 (GHVDHGKT). 352–359 (GHVDHGKT) provides a ligand contact to GTP. Residues 377 to 381 (GITQH) form a G2 region. The G3 stretch occupies residues 399–402 (DTPG). Residues 399–403 (DTPGH) and 453–456 (NKID) contribute to the GTP site. Positions 453–456 (NKID) are G4. Residues 489-491 (SAK) form a G5 region.

This sequence belongs to the TRAFAC class translation factor GTPase superfamily. Classic translation factor GTPase family. IF-2 subfamily.

The protein localises to the cytoplasm. One of the essential components for the initiation of protein synthesis. Protects formylmethionyl-tRNA from spontaneous hydrolysis and promotes its binding to the 30S ribosomal subunits. Also involved in the hydrolysis of GTP during the formation of the 70S ribosomal complex. This Haemophilus influenzae (strain PittGG) protein is Translation initiation factor IF-2.